We begin with the raw amino-acid sequence, 368 residues long: Cytochrome b (368 aa).

Helical transmembrane passes span Phe33–Met53, Trp77–Gly99, Thr112–Val132, and Phe178–Ile198. Positions 83 and 97 each coordinate heme b. The heme b site is built by His182 and His196. A ubiquinone is bound at residue His201. 4 helical membrane-spanning segments follow: residues Phe224–Leu244, Leu288–Asn308, Ile323–Val343, and Ser345–Met365.

It belongs to the cytochrome b family. As to quaternary structure, the main subunits of complex b-c1 are: cytochrome b, cytochrome c1 and the Rieske protein. It depends on heme b as a cofactor.

It localises to the mitochondrion inner membrane. Component of the ubiquinol-cytochrome c reductase complex (complex III or cytochrome b-c1 complex) that is part of the mitochondrial respiratory chain. The b-c1 complex mediates electron transfer from ubiquinol to cytochrome c. Contributes to the generation of a proton gradient across the mitochondrial membrane that is then used for ATP synthesis. The chain is Cytochrome b (mt:Cyt-b) from Bugula neritina (Brown bryozoan).